Consider the following 597-residue polypeptide: Adenine deaminase (597 aa).

It belongs to the metallo-dependent hydrolases superfamily. Adenine deaminase family. Mn(2+) serves as cofactor.

It catalyses the reaction adenine + H2O + H(+) = hypoxanthine + NH4(+). This chain is Adenine deaminase, found in Paracoccus denitrificans (strain Pd 1222).